The primary structure comprises 206 residues: Type III pantothenate kinase (206 aa).

5–12 (DIGNTFLH) contacts ATP. Residues tyrosine 69 and 73–76 (GVDR) contribute to the substrate site. Aspartate 75 functions as the Proton acceptor in the catalytic mechanism. Aspartate 90 serves as a coordination point for K(+). Serine 93 serves as a coordination point for ATP. Threonine 145 is a substrate binding site.

Belongs to the type III pantothenate kinase family. In terms of assembly, homodimer. Requires NH4(+) as cofactor. K(+) is required as a cofactor.

Its subcellular location is the cytoplasm. It carries out the reaction (R)-pantothenate + ATP = (R)-4'-phosphopantothenate + ADP + H(+). It participates in cofactor biosynthesis; coenzyme A biosynthesis; CoA from (R)-pantothenate: step 1/5. Its function is as follows. Catalyzes the phosphorylation of pantothenate (Pan), the first step in CoA biosynthesis. The polypeptide is Type III pantothenate kinase (Helicobacter hepaticus (strain ATCC 51449 / 3B1)).